The following is a 140-amino-acid chain: UPF0179 protein Msp_0996 (140 aa).

Belongs to the UPF0179 family.

In Methanosphaera stadtmanae (strain ATCC 43021 / DSM 3091 / JCM 11832 / MCB-3), this protein is UPF0179 protein Msp_0996.